A 430-amino-acid polypeptide reads, in one-letter code: Histidine--tRNA ligase (430 aa).

This sequence belongs to the class-II aminoacyl-tRNA synthetase family. As to quaternary structure, homodimer.

The protein localises to the cytoplasm. The enzyme catalyses tRNA(His) + L-histidine + ATP = L-histidyl-tRNA(His) + AMP + diphosphate + H(+). In Anaplasma marginale (strain Florida), this protein is Histidine--tRNA ligase.